The chain runs to 593 residues: UvrABC system protein C (593 aa).

A GIY-YIG domain is found at 14-91 (DSPGCYLHKD…IQENMPKYNI (78 aa)). One can recognise a UVR domain in the interval 196–231 (NKIVNGLTEKMKSAAMTMEFERAAEYRDLIEAISLL).

This sequence belongs to the UvrC family. As to quaternary structure, interacts with UvrB in an incision complex.

It is found in the cytoplasm. Its function is as follows. The UvrABC repair system catalyzes the recognition and processing of DNA lesions. UvrC both incises the 5' and 3' sides of the lesion. The N-terminal half is responsible for the 3' incision and the C-terminal half is responsible for the 5' incision. This chain is UvrABC system protein C, found in Streptococcus agalactiae serotype V (strain ATCC BAA-611 / 2603 V/R).